The following is a 224-amino-acid chain: Steroid receptor RNA activator 1 (224 aa).

Disordered stretches follow at residues 1 to 90 (MAEL…EPTS) and 201 to 224 (AANE…QQAS). Phosphoserine occurs at positions 48, 57, and 75. A compositionally biased stretch (pro residues) spans 58–76 (PGPPPMGPPPPSSKAPRSP). The span at 201–215 (AANEEKSAATAEKNH) shows a compositional bias: basic and acidic residues.

This sequence belongs to the SRA1 family. SRA1 RNA exists in a ribonucleoprotein complex containing NCOA1. The RNA also forms a complex with PUS1 and RARG in the nucleus. Interacts with AR. As to expression, highly expressed in liver and skeletal muscle and to a lesser extent in brain. Also expressed in both normal and tumorigenic breast epithelial cell lines. Significantly up-regulated in human tumors of the breast, ovary, and uterus.

It is found in the nucleus. The protein localises to the cytoplasm. Functionally, functional RNA which acts as a transcriptional coactivator that selectively enhances steroid receptor-mediated transactivation ligand-independently through a mechanism involving the modulating N-terminal domain (AF-1) of steroid receptors. Also mediates transcriptional coactivation of steroid receptors ligand-dependently through the steroid-binding domain (AF-2). Enhances cellular proliferation and differentiation and promotes apoptosis in vivo. May play a role in tumorigenesis. This Homo sapiens (Human) protein is Steroid receptor RNA activator 1.